Here is an 899-residue protein sequence, read N- to C-terminus: Translation initiation factor IF-2 (899 aa).

Disordered stretches follow at residues 115 to 137 (EAKARAEQQAREAAEQKARLQTE), 170 to 189 (RGGGTVKPAPKPAETLEQKK), and 262 to 309 (DREI…HGFE). Residues 399-568 (TRPPVVTIMG…LIQSELMELK (170 aa)) form the tr-type G domain. The interval 408-415 (GHVDHGKT) is G1. 408–415 (GHVDHGKT) is a binding site for GTP. The segment at 433-437 (GITQH) is G2. A G3 region spans residues 454–457 (DTPG). Residues 454–458 (DTPGH) and 508–511 (NKMD) contribute to the GTP site. The tract at residues 508–511 (NKMD) is G4. Residues 544-546 (SAH) form a G5 region.

Belongs to the TRAFAC class translation factor GTPase superfamily. Classic translation factor GTPase family. IF-2 subfamily.

It localises to the cytoplasm. Functionally, one of the essential components for the initiation of protein synthesis. Protects formylmethionyl-tRNA from spontaneous hydrolysis and promotes its binding to the 30S ribosomal subunits. Also involved in the hydrolysis of GTP during the formation of the 70S ribosomal complex. The polypeptide is Translation initiation factor IF-2 (Acinetobacter baumannii (strain SDF)).